Here is a 232-residue protein sequence, read N- to C-terminus: Large ribosomal subunit protein uL1 (232 aa).

It belongs to the universal ribosomal protein uL1 family. In terms of assembly, part of the 50S ribosomal subunit.

Functionally, binds directly to 23S rRNA. The L1 stalk is quite mobile in the ribosome, and is involved in E site tRNA release. Its function is as follows. Protein L1 is also a translational repressor protein, it controls the translation of the L11 operon by binding to its mRNA. The polypeptide is Large ribosomal subunit protein uL1 (Chlamydia pneumoniae (Chlamydophila pneumoniae)).